Here is a 137-residue protein sequence, read N- to C-terminus: Small ribosomal subunit protein uS12 (137 aa).

The interval 1-57 (MPTINQLVRKPRKSKVEKPKSPALNVGYNSHKKVQTNVSSPQKRGVATRVGTMTPRK) is disordered. 3-methylthioaspartic acid is present on aspartate 102.

The protein belongs to the universal ribosomal protein uS12 family. In terms of assembly, part of the 30S ribosomal subunit. Contacts proteins S8 and S17. May interact with IF1 in the 30S initiation complex.

In terms of biological role, with S4 and S5 plays an important role in translational accuracy. Its function is as follows. Interacts with and stabilizes bases of the 16S rRNA that are involved in tRNA selection in the A site and with the mRNA backbone. Located at the interface of the 30S and 50S subunits, it traverses the body of the 30S subunit contacting proteins on the other side and probably holding the rRNA structure together. The combined cluster of proteins S8, S12 and S17 appears to hold together the shoulder and platform of the 30S subunit. The sequence is that of Small ribosomal subunit protein uS12 from Streptococcus pneumoniae (strain Hungary19A-6).